We begin with the raw amino-acid sequence, 529 residues long: Cytochrome P450 monooxygenase atmQ (529 aa).

Helical transmembrane passes span 22-42 (YPFAAPTWVYLVGAILIQQLA) and 51-71 (SWVNVPVVGGHGIIGSWIAAF). A heme-binding site is contributed by C467.

The protein belongs to the cytochrome P450 family. Heme serves as cofactor.

Its subcellular location is the membrane. The protein operates within secondary metabolite biosynthesis. Cytochrome P450 monooxygenase; part of the ATM2 gene cluster that mediates the biosynthesis of aflatrem, a tremorgenic mycotoxin with acute neurotoxic effects. Synthesis of geranylgeranyl diphosphate (GGPP) by AtmG (a GGPP synthase) precedes condensation of GGPP with indole 3-glycerol phosphate, followed by epoxidation and cyclization by AtmM (a FAD-dependent monooxygenase) and AtmC (a prenyltransferase) to produce paspaline. AtmB is also essential for paspaline production, but its exact role has not been identified yet. AtmP, a cytochrome P450 monooxygenase, subsequently converts paspaline to 13-desoxypaxilline via PC-M6 by removal of the C-30 methyl group and oxidation at C-10. AtmQ, a cytochrome P450 monooxygenase, then catalyzes the oxidation of 13-desoxypaxilline, first at C-7 to produce paspalicine and then at C-13 to form paspalinine. Finally, AtmD prenylates paspalinine to form aflatrem. This is Cytochrome P450 monooxygenase atmQ from Aspergillus flavus.